A 146-amino-acid chain; its full sequence is Hemoglobin subunit beta (146 aa).

N-acetylvaline is present on Val1. The 145-residue stretch at His2–His146 folds into the Globin domain. Thr12 carries the phosphothreonine modification. Phosphoserine is present on Ser44. At Lys59 the chain carries N6-acetyllysine. His63 is a binding site for heme b. At Lys82 the chain carries N6-acetyllysine. Heme b is bound at residue His92. At Cys93 the chain carries S-nitrosocysteine. Position 144 is an N6-acetyllysine (Lys144).

It belongs to the globin family. Heterotetramer of two alpha chains and two beta chains. Red blood cells.

Its function is as follows. Involved in oxygen transport from the lung to the various peripheral tissues. This is Hemoglobin subunit beta (HBB) from Hylobates lar (Lar gibbon).